The following is a 185-amino-acid chain: uncharacterized protein (185 aa).

Positions methionine 1–alanine 29 are cleaved as a signal peptide. The tract at residues lysine 41–threonine 66 is disordered.

In terms of processing, glycosylated; by Pmt.

It is found in the secreted. This is an uncharacterized protein from Corynebacterium glutamicum (strain ATCC 13032 / DSM 20300 / JCM 1318 / BCRC 11384 / CCUG 27702 / LMG 3730 / NBRC 12168 / NCIMB 10025 / NRRL B-2784 / 534).